A 399-amino-acid chain; its full sequence is Semaphorin-like protein 139 (399 aa).

An N-terminal signal peptide occupies residues 1–14 (MIPLLFILFYFTNC). The Sema domain occupies 15-399 (IEWHKFETSE…IPRMKKILKM (385 aa)).

The protein belongs to the semaphorin family. As to quaternary structure, interacts with host VESPR.

Its subcellular location is the secreted. In terms of biological role, acts as a semaphorin-like protein and binds to host plexin C1 receptor. May alter the movement of plexin C1-expressing cells including dendritic cells, monocytes, or granulocytes in the proximity of infected cells. May also regulate host cell cytoskeleton of neighboring cells to improve viral infection. This chain is Semaphorin-like protein 139 (EVM139), found in Ectromelia virus (strain Moscow) (ECTV).